The primary structure comprises 470 residues: Neuraminidase (470 aa).

Residues 1 to 14 (MNPNQKIITIGSAS) are Intravirion-facing. Residues 11-32 (GSASLGLVILNVILHVVSIIVT) form an involved in apical transport and lipid raft association region. Residues 15 to 35 (LGLVILNVILHVVSIIVTVLV) form a helical membrane-spanning segment. Positions 32 to 86 (TVLVLSNNGTGPNCNGTIIREYNETVRVERITQWYNTNIIEYIEEPSNEYYMSNT) are hypervariable stalk region. The Virion surface portion of the chain corresponds to 36 to 470 (LSNNGTGPNC…AILPFDIDKM (435 aa)). 3 N-linked (GlcNAc...) asparagine; by host glycosylation sites follow: N39, N46, and N54. Residues 89–470 (LCEAQGFAPF…AILPFDIDKM (382 aa)) form a head of neuraminidase region. Intrachain disulfides connect C90/C417, C122/C127, C182/C229, C231/C236, C277/C290, C279/C288, C316/C335, and C421/C446. R116 contributes to the substrate binding site. N-linked (GlcNAc...) asparagine; by host glycosylation is present at N144. The Proton donor/acceptor role is filled by D149. A substrate-binding site is contributed by R150. 275-276 (EE) lines the substrate pocket. Substrate is bound at residue R291. Position 292 (D292) interacts with Ca(2+). Residue N293 is glycosylated (N-linked (GlcNAc...) asparagine; by host). Ca(2+) is bound by residues G296 and D322. Residue R368 coordinates substrate. N-linked (GlcNAc...) asparagine; by host glycosylation occurs at N398. The active-site Nucleophile is the Y402.

This sequence belongs to the glycosyl hydrolase 34 family. In terms of assembly, homotetramer. It depends on Ca(2+) as a cofactor. Post-translationally, N-glycosylated.

Its subcellular location is the virion membrane. The protein resides in the host apical cell membrane. It carries out the reaction Hydrolysis of alpha-(2-&gt;3)-, alpha-(2-&gt;6)-, alpha-(2-&gt;8)- glycosidic linkages of terminal sialic acid residues in oligosaccharides, glycoproteins, glycolipids, colominic acid and synthetic substrates.. Its activity is regulated as follows. Inhibited by the neuraminidase inhibitors zanamivir (Relenza) and oseltamivir (Tamiflu). These drugs interfere with the release of progeny virus from infected cells and are effective against all influenza strains. Resistance to neuraminidase inhibitors is quite rare. Functionally, catalyzes the removal of terminal sialic acid residues from viral and cellular glycoconjugates. Cleaves off the terminal sialic acids on the glycosylated HA during virus budding to facilitate virus release. Additionally helps virus spread through the circulation by further removing sialic acids from the cell surface. These cleavages prevent self-aggregation and ensure the efficient spread of the progeny virus from cell to cell. Otherwise, infection would be limited to one round of replication. Described as a receptor-destroying enzyme because it cleaves a terminal sialic acid from the cellular receptors. May facilitate viral invasion of the upper airways by cleaving the sialic acid moieties on the mucin of the airway epithelial cells. Likely to plays a role in the budding process through its association with lipid rafts during intracellular transport. May additionally display a raft-association independent effect on budding. Plays a role in the determination of host range restriction on replication and virulence. Sialidase activity in late endosome/lysosome traffic seems to enhance virus replication. The protein is Neuraminidase of Influenza A virus (strain A/Equine/Miami/1/1963 H3N8).